We begin with the raw amino-acid sequence, 534 residues long: Cytochrome c oxidase subunit 1 (534 aa).

The chain crosses the membrane as a helical span at residues 16–36; the sequence is VLYFIFAIFCGMAGTAMSLII. Residues E39, A42, and G44 each coordinate Ca(2+). The next 6 membrane-spanning stretches (helical) occupy residues 57–77, 101–121, 147–167, 182–202, 235–255, and 267–287; these read VLVV…ALIG, ISFW…LVES, AIFA…NFIV, LPLF…SLPV, LFWF…FGII, and VFGE…GFLV. H62 serves as a coordination point for Fe(II)-heme a. H241 contributes to the Cu cation binding site. A cross-link (1'-histidyl-3'-tyrosine (His-Tyr)) is located at residues 241-245; the sequence is HPEVY. Residue Y245 participates in O2 binding. Positions 290 and 291 each coordinate Cu cation. 2 helical membrane passes run 310-330 and 338-358; these read MIIA…IYGG and MLYA…GVAL. 2 residues coordinate Mg(2+): H368 and D369. 2 helical membrane-spanning segments follow: residues 372–392 and 412–432; these read YVVG…LFAG and IQFW…HFLG. H376 is a binding site for heme a3. Fe(II)-heme a is bound at residue H378. Residue P441 coordinates Ca(2+). A helical transmembrane segment spans residues 452 to 472; that stretch reads YVASIGSIIAVFSLFLFIYIL.

Belongs to the heme-copper respiratory oxidase family. As to quaternary structure, component of the cytochrome c oxidase (complex IV, CIV), a multisubunit enzyme composed of a catalytic core of 3 subunits and several supernumerary subunits. The complex exists as a monomer or a dimer and forms supercomplexes (SCs) in the inner mitochondrial membrane with ubiquinol-cytochrome c oxidoreductase (cytochrome b-c1 complex, complex III, CIII). Heme serves as cofactor. The cofactor is Cu cation.

The protein resides in the mitochondrion inner membrane. It carries out the reaction 4 Fe(II)-[cytochrome c] + O2 + 8 H(+)(in) = 4 Fe(III)-[cytochrome c] + 2 H2O + 4 H(+)(out). It functions in the pathway energy metabolism; oxidative phosphorylation. Functionally, component of the cytochrome c oxidase, the last enzyme in the mitochondrial electron transport chain which drives oxidative phosphorylation. The respiratory chain contains 3 multisubunit complexes succinate dehydrogenase (complex II, CII), ubiquinol-cytochrome c oxidoreductase (cytochrome b-c1 complex, complex III, CIII) and cytochrome c oxidase (complex IV, CIV), that cooperate to transfer electrons derived from NADH and succinate to molecular oxygen, creating an electrochemical gradient over the inner membrane that drives transmembrane transport and the ATP synthase. Cytochrome c oxidase is the component of the respiratory chain that catalyzes the reduction of oxygen to water. Electrons originating from reduced cytochrome c in the intermembrane space (IMS) are transferred via the dinuclear copper A center (CU(A)) of subunit 2 and heme A of subunit 1 to the active site in subunit 1, a binuclear center (BNC) formed by heme A3 and copper B (CU(B)). The BNC reduces molecular oxygen to 2 water molecules using 4 electrons from cytochrome c in the IMS and 4 protons from the mitochondrial matrix. This chain is Cytochrome c oxidase subunit 1 (COX1), found in Kluyveromyces lactis (strain ATCC 8585 / CBS 2359 / DSM 70799 / NBRC 1267 / NRRL Y-1140 / WM37) (Yeast).